A 296-amino-acid polypeptide reads, in one-letter code: Protoheme IX farnesyltransferase (296 aa).

The Cytoplasmic segment spans residues M1–V9. Residues T10–L28 form a helical membrane-spanning segment. Over A29 to P37 the chain is Periplasmic. Residues L38–F56 form a helical membrane-spanning segment. At N57–K78 the chain is on the cytoplasmic side. Residues G79–G97 form a helical membrane-spanning segment. Residues F98–P107 lie on the Periplasmic side of the membrane. Residues L108–L126 traverse the membrane as a helical segment. The Cytoplasmic portion of the chain corresponds to Y127 to P197. A helical membrane pass occupies residues V198–F216. Over A217–Y228 the chain is Periplasmic. Residues A229–M247 form a helical membrane-spanning segment. The Cytoplasmic portion of the chain corresponds to A248–S268. The helical transmembrane segment at I269–D287 threads the bilayer. Residues S288–W296 lie on the Periplasmic side of the membrane.

This sequence belongs to the UbiA prenyltransferase family. Protoheme IX farnesyltransferase subfamily.

The protein resides in the cell inner membrane. The catalysed reaction is heme b + (2E,6E)-farnesyl diphosphate + H2O = Fe(II)-heme o + diphosphate. The protein operates within porphyrin-containing compound metabolism; heme O biosynthesis; heme O from protoheme: step 1/1. Functionally, converts heme B (protoheme IX) to heme O by substitution of the vinyl group on carbon 2 of heme B porphyrin ring with a hydroxyethyl farnesyl side group. The chain is Protoheme IX farnesyltransferase from Escherichia coli O139:H28 (strain E24377A / ETEC).